Here is a 172-residue protein sequence, read N- to C-terminus: Ribosome maturation factor RimM (172 aa).

Residues 100-172 (PGEYYRVDLV…RIVVDWDPGF (73 aa)) form the PRC barrel domain.

Belongs to the RimM family. As to quaternary structure, binds ribosomal protein uS19.

It is found in the cytoplasm. Its function is as follows. An accessory protein needed during the final step in the assembly of 30S ribosomal subunit, possibly for assembly of the head region. Essential for efficient processing of 16S rRNA. May be needed both before and after RbfA during the maturation of 16S rRNA. It has affinity for free ribosomal 30S subunits but not for 70S ribosomes. The polypeptide is Ribosome maturation factor RimM (Methylococcus capsulatus (strain ATCC 33009 / NCIMB 11132 / Bath)).